The primary structure comprises 153 residues: MKLNELYNNIGAKKRKKRIARGIGSGKGKTGGRGIKGQKSRSGVAIKGFEGGQTPIIKRLPKRGFNCISTKKYNIVNIYNIEVALADGRLSVADIITKEKLIEAGVVNNKNNKKLVKLLSLCSDDFATPLSLKLDAYSSKAKDFIEQAGGKLL.

Residues 21-40 (RGIGSGKGKTGGRGIKGQKS) form a disordered region. Residues 23 to 35 (IGSGKGKTGGRGI) show a composition bias toward gly residues.

Belongs to the universal ribosomal protein uL15 family. In terms of assembly, part of the 50S ribosomal subunit.

Binds to the 23S rRNA. This chain is Large ribosomal subunit protein uL15, found in Rickettsia canadensis (strain McKiel).